The sequence spans 248 residues: Flagellar L-ring protein (248 aa).

Residues 1 to 23 (MRHAFRHSVRTLGLLGLLPVLSA) form the signal peptide. C24 carries the N-palmitoyl cysteine lipid modification. C24 carries the S-diacylglycerol cysteine lipid modification.

This sequence belongs to the FlgH family. As to quaternary structure, the basal body constitutes a major portion of the flagellar organelle and consists of four rings (L,P,S, and M) mounted on a central rod.

The protein localises to the cell outer membrane. It localises to the bacterial flagellum basal body. Its function is as follows. Assembles around the rod to form the L-ring and probably protects the motor/basal body from shearing forces during rotation. The polypeptide is Flagellar L-ring protein (Gluconobacter oxydans (strain 621H) (Gluconobacter suboxydans)).